Here is a 357-residue protein sequence, read N- to C-terminus: Golgi to ER traffic protein 2 (357 aa).

Over 1–224 (MSETTDKQLT…AKYHTYQEQL (224 aa)) the chain is Cytoplasmic. Positions 65-81 (TDTATVTDSSTNATSVS) are enriched in low complexity. The tract at residues 65–99 (TDTATVTDSSTNATSVSPSAAKATPTSTGVSSAIS) is disordered. Positions 88 to 98 (TPTSTGVSSAI) are enriched in polar residues. A helical transmembrane segment spans residues 225-245 (WQFRFLVVRILATIFNFAYHF). At 246–270 (ITIPSFTASNHAYVRDLSEVYPLLG) the chain is on the lumenal side. Residues 271 to 290 (FMTIFTSIEVVIIATYYLLF) traverse the membrane as a helical segment. Residues 291–334 (TKLGLFHASNQKSFILKGISTLSMFVPQLLRYEPLVATFLGYKE) lie on the Cytoplasmic side of the membrane. Residues 335-355 (LLGIFVGDLSLVVVMFGLLSF) form a helical membrane-spanning segment. Over 356–357 (SN) the chain is Lumenal.

Belongs to the GET2 family. Component of the Golgi to ER traffic (GET) complex, which is composed of GET1, GET2 and GET3. Within the complex, GET1 and GET2 form a heterotetramer which is stabilized by phosphatidylinositol binding and which binds to the GET3 homodimer.

It localises to the endoplasmic reticulum membrane. It is found in the golgi apparatus membrane. Required for the post-translational delivery of tail-anchored (TA) proteins to the endoplasmic reticulum. Together with GET1, acts as a membrane receptor for soluble GET3, which recognizes and selectively binds the transmembrane domain of TA proteins in the cytosol. The GET complex cooperates with the HDEL receptor ERD2 to mediate the ATP-dependent retrieval of resident ER proteins that contain a C-terminal H-D-E-L retention signal from the Golgi to the ER. The chain is Golgi to ER traffic protein 2 from Lodderomyces elongisporus (strain ATCC 11503 / CBS 2605 / JCM 1781 / NBRC 1676 / NRRL YB-4239) (Yeast).